The sequence spans 257 residues: Thiazole synthase (257 aa).

The Schiff-base intermediate with DXP role is filled by Lys96. 1-deoxy-D-xylulose 5-phosphate is bound by residues Gly157, 184-185 (AG), and 206-207 (NT).

Belongs to the ThiG family. In terms of assembly, homotetramer. Forms heterodimers with either ThiH or ThiS.

It localises to the cytoplasm. The catalysed reaction is [ThiS sulfur-carrier protein]-C-terminal-Gly-aminoethanethioate + 2-iminoacetate + 1-deoxy-D-xylulose 5-phosphate = [ThiS sulfur-carrier protein]-C-terminal Gly-Gly + 2-[(2R,5Z)-2-carboxy-4-methylthiazol-5(2H)-ylidene]ethyl phosphate + 2 H2O + H(+). It participates in cofactor biosynthesis; thiamine diphosphate biosynthesis. In terms of biological role, catalyzes the rearrangement of 1-deoxy-D-xylulose 5-phosphate (DXP) to produce the thiazole phosphate moiety of thiamine. Sulfur is provided by the thiocarboxylate moiety of the carrier protein ThiS. In vitro, sulfur can be provided by H(2)S. The sequence is that of Thiazole synthase from Agrobacterium fabrum (strain C58 / ATCC 33970) (Agrobacterium tumefaciens (strain C58)).